The sequence spans 256 residues: Thiazole synthase (256 aa).

Lys96 serves as the catalytic Schiff-base intermediate with DXP. 1-deoxy-D-xylulose 5-phosphate contacts are provided by residues Gly157, 184 to 185, and 206 to 207; these read AG and NT.

Belongs to the ThiG family. As to quaternary structure, homotetramer. Forms heterodimers with either ThiH or ThiS.

It localises to the cytoplasm. It catalyses the reaction [ThiS sulfur-carrier protein]-C-terminal-Gly-aminoethanethioate + 2-iminoacetate + 1-deoxy-D-xylulose 5-phosphate = [ThiS sulfur-carrier protein]-C-terminal Gly-Gly + 2-[(2R,5Z)-2-carboxy-4-methylthiazol-5(2H)-ylidene]ethyl phosphate + 2 H2O + H(+). Its pathway is cofactor biosynthesis; thiamine diphosphate biosynthesis. Catalyzes the rearrangement of 1-deoxy-D-xylulose 5-phosphate (DXP) to produce the thiazole phosphate moiety of thiamine. Sulfur is provided by the thiocarboxylate moiety of the carrier protein ThiS. In vitro, sulfur can be provided by H(2)S. The polypeptide is Thiazole synthase (Brucella canis (strain ATCC 23365 / NCTC 10854 / RM-666)).